A 909-amino-acid polypeptide reads, in one-letter code: Alanine--tRNA ligase (909 aa).

Positions 600, 604, 704, and 708 each coordinate Zn(2+).

It belongs to the class-II aminoacyl-tRNA synthetase family. It depends on Zn(2+) as a cofactor.

It localises to the cytoplasm. It carries out the reaction tRNA(Ala) + L-alanine + ATP = L-alanyl-tRNA(Ala) + AMP + diphosphate. In terms of biological role, catalyzes the attachment of alanine to tRNA(Ala) in a two-step reaction: alanine is first activated by ATP to form Ala-AMP and then transferred to the acceptor end of tRNA(Ala). Also edits incorrectly charged Ser-tRNA(Ala) and Gly-tRNA(Ala) via its editing domain. The polypeptide is Alanine--tRNA ligase (Staphylothermus marinus (strain ATCC 43588 / DSM 3639 / JCM 9404 / F1)).